The sequence spans 772 residues: Nudix hydrolase 3 (772 aa).

Residues 1-14 (MAEEHFDVLTKSGE) are compositionally biased toward basic and acidic residues. Residues 1–25 (MAEEHFDVLTKSGEKTGVSKPRGEV) form a disordered region. The 143-residue stretch at 30–172 (DYHRAVHVWI…DPAYVPYDVN (143 aa)) folds into the Nudix hydrolase domain. The Nudix box motif lies at 69–90 (GHISAGDTSLLSAQRELEEELG). Residues glutamate 84 and glutamate 88 each contribute to the Mg(2+) site.

The protein belongs to the Nudix hydrolase family. Mg(2+) is required as a cofactor. The cofactor is Mn(2+). Expressed in roots, stems and, at lower level, leaves.

In terms of biological role, probably mediates the hydrolysis of some nucleoside diphosphate derivatives. The sequence is that of Nudix hydrolase 3 (NUDT3) from Arabidopsis thaliana (Mouse-ear cress).